The chain runs to 249 residues: 3-deoxy-D-manno-octulosonic acid kinase (249 aa).

Asp175 is an active-site residue.

This sequence belongs to the protein kinase superfamily. KdkA/RfaP family.

The protein localises to the cell inner membrane. It catalyses the reaction an alpha-Kdo-(2-&gt;6)-lipid IVA + ATP = a 4-O-phospho-alpha-Kdo-(2-&gt;6)-lipid IVA + ADP + H(+). It functions in the pathway bacterial outer membrane biogenesis; LPS core biosynthesis. Functionally, catalyzes the ATP-dependent phosphorylation of the 3-deoxy-D-manno-octulosonic acid (Kdo) residue in Kdo-lipid IV(A) at the 4-OH position. This chain is 3-deoxy-D-manno-octulosonic acid kinase, found in Stenotrophomonas maltophilia (strain K279a).